Consider the following 126-residue polypeptide: Acidic phospholipase A2 4 (126 aa).

Serine 1 is a signal peptide. A propeptide spanning residues asparagine 2–leucine 7 is cleaved from the precursor. 7 cysteine pairs are disulfide-bonded: cysteine 18–cysteine 78, cysteine 33–cysteine 125, cysteine 35–cysteine 51, cysteine 50–cysteine 106, cysteine 57–cysteine 99, cysteine 67–cysteine 92, and cysteine 85–cysteine 97. 3 residues coordinate Ca(2+): tyrosine 34, glycine 36, and glycine 38. The active site involves histidine 54. Aspartate 55 is a Ca(2+) binding site. Aspartate 100 is an active-site residue.

This sequence belongs to the phospholipase A2 family. Group I subfamily. D49 sub-subfamily. As to quaternary structure, monomer. The cofactor is Ca(2+). As to expression, expressed by the venom gland.

The protein resides in the secreted. The catalysed reaction is a 1,2-diacyl-sn-glycero-3-phosphocholine + H2O = a 1-acyl-sn-glycero-3-phosphocholine + a fatty acid + H(+). Functionally, snake venom phospholipase A2 (PLA2) that exhibits strong anticoagulant activity, which is not due to the catalytic activity. PLA2 catalyzes the calcium-dependent hydrolysis of the 2-acyl groups in 3-sn-phosphoglycerides. This is Acidic phospholipase A2 4 from Naja sagittifera (Andaman cobra).